Here is a 103-residue protein sequence, read N- to C-terminus: Hexon-interlacing protein (103 aa).

Residues 72–99 (LDELKIQVAAMQNSVTAIQREVNDLKQR) adopt a coiled-coil conformation.

The protein belongs to the adenoviridae hexon-interlacing protein family. Homotrimer. Interacts with hexon protein; this interaction tethers the hexons together. Self-interacts with adjacent proteins. Interacts with kinesin light chain KLC1; this interaction leads to capsid disruption at the nuclear pore complex during virus entry into host cell.

Its subcellular location is the virion. The protein localises to the host nucleus. Its function is as follows. Structural component of the virion that acts as a cement protein on the capsid exterior and forms triskelion structures consisting of three molecules that stabilize three hexon trimers at the center of each icosahedral facet and fixes the peripentonal hexons. Dispensable for assembly. During virus entry, recruits the anterograde motor kinesin-1 to the capsid docked at the nuclear pore complex thereby subjecting the docked capsid to a pulling force. The resulting tension leads to capsid disruption, dispersion of capsid fragments toward cell periphery and eventually viral DNA entry into the host nucleus. The chain is Hexon-interlacing protein from Canis lupus familiaris (Dog).